Reading from the N-terminus, the 561-residue chain is Putative transport protein YbjL (561 aa).

5 consecutive transmembrane segments (helical) span residues 8–28 (LLNG…LCLG), 32–52 (LGSI…LLGQ), 66–86 (FMLF…SIFF), 94–114 (MLAL…GKLF), and 158–178 (NLSL…IVGA). RCK C-terminal domains follow at residues 200–288 (RGLD…SFRN) and 292–373 (VFDR…RIGF). 5 helical membrane-spanning segments follow: residues 383 to 403 (LLAF…TFQF), 406 to 426 (FSFG…LGFM), 451 to 471 (VFMA…LGAI), 475 to 495 (MLIA…LFGA), and 540 to 560 (AIAN…WPGL).

The protein belongs to the AAE transporter (TC 2.A.81) family. YbjL subfamily.

Its subcellular location is the cell membrane. This is Putative transport protein YbjL from Escherichia coli O127:H6 (strain E2348/69 / EPEC).